The primary structure comprises 339 residues: Serine/threonine-protein kinase SRK2J (339 aa).

Residues 4–260 form the Protein kinase domain; that stretch reads YEMVKDLGFG…LKEIKSHAWF (257 aa). ATP contacts are provided by residues 10-18 and lysine 33; that span reads LGFGNFGLA. The active-site Proton acceptor is the aspartate 123. The tract at residues 308 to 339 is disordered; that stretch reads SRPVESLGSDKKDDDEEEYLDANDEEWYDDYA. Positions 320-339 are enriched in acidic residues; that stretch reads DDDEEEYLDANDEEWYDDYA.

It belongs to the protein kinase superfamily. Ser/Thr protein kinase family. As to expression, expressed in seedlings.

It carries out the reaction L-seryl-[protein] + ATP = O-phospho-L-seryl-[protein] + ADP + H(+). The catalysed reaction is L-threonyl-[protein] + ATP = O-phospho-L-threonyl-[protein] + ADP + H(+). The polypeptide is Serine/threonine-protein kinase SRK2J (SRK2J) (Arabidopsis thaliana (Mouse-ear cress)).